The chain runs to 177 residues: Outer membrane lipoprotein Blc (177 aa).

Positions 1–18 (MRILPVVAAVTAAFLVVA) are cleaved as a signal peptide. The N-palmitoyl cysteine moiety is linked to residue Cys-19. Cys-19 carries S-diacylglycerol cysteine lipidation.

This sequence belongs to the calycin superfamily. Lipocalin family. Homodimer.

Its subcellular location is the cell outer membrane. In terms of biological role, involved in the storage or transport of lipids necessary for membrane maintenance under stressful conditions. Displays a binding preference for lysophospholipids. The protein is Outer membrane lipoprotein Blc of Citrobacter freundii.